Consider the following 406-residue polypeptide: Imidazolonepropionase (406 aa).

Residues His-72 and His-74 each contribute to the Fe(3+) site. Zn(2+) contacts are provided by His-72 and His-74. Residues Arg-81, Tyr-144, and His-177 each coordinate 4-imidazolone-5-propanoate. Tyr-144 contacts N-formimidoyl-L-glutamate. His-242 contributes to the Fe(3+) binding site. His-242 serves as a coordination point for Zn(2+). Gln-245 serves as a coordination point for 4-imidazolone-5-propanoate. Residue Asp-317 coordinates Fe(3+). Asp-317 serves as a coordination point for Zn(2+). The N-formimidoyl-L-glutamate site is built by Asn-319 and Gly-321. A 4-imidazolone-5-propanoate-binding site is contributed by Thr-322.

This sequence belongs to the metallo-dependent hydrolases superfamily. HutI family. The cofactor is Zn(2+). Fe(3+) is required as a cofactor.

The protein localises to the cytoplasm. The enzyme catalyses 4-imidazolone-5-propanoate + H2O = N-formimidoyl-L-glutamate. It participates in amino-acid degradation; L-histidine degradation into L-glutamate; N-formimidoyl-L-glutamate from L-histidine: step 3/3. Functionally, catalyzes the hydrolytic cleavage of the carbon-nitrogen bond in imidazolone-5-propanoate to yield N-formimidoyl-L-glutamate. It is the third step in the universal histidine degradation pathway. This Yersinia enterocolitica serotype O:8 / biotype 1B (strain NCTC 13174 / 8081) protein is Imidazolonepropionase.